The primary structure comprises 508 residues: ATP synthase subunit alpha, mitochondrial (508 aa).

ATP is bound at residue 171–178; that stretch reads GDRQTGKT.

The protein belongs to the ATPase alpha/beta chains family. In terms of assembly, F-type ATPases have 2 components, CF(1) - the catalytic core - and CF(0) - the membrane proton channel. CF(1) has five subunits: alpha(3), beta(3), gamma(1), delta(1), epsilon(1). CF(0) has three main subunits: a, b and c.

It is found in the mitochondrion. It localises to the mitochondrion inner membrane. Its function is as follows. Mitochondrial membrane ATP synthase (F(1)F(0) ATP synthase or Complex V) produces ATP from ADP in the presence of a proton gradient across the membrane which is generated by electron transport complexes of the respiratory chain. F-type ATPases consist of two structural domains, F(1) - containing the extramembraneous catalytic core, and F(0) - containing the membrane proton channel, linked together by a central stalk and a peripheral stalk. During catalysis, ATP synthesis in the catalytic domain of F(1) is coupled via a rotary mechanism of the central stalk subunits to proton translocation. Subunits alpha and beta form the catalytic core in F(1). Rotation of the central stalk against the surrounding alpha(3)beta(3) subunits leads to hydrolysis of ATP in three separate catalytic sites on the beta subunits. Subunit alpha does not bear the catalytic high-affinity ATP-binding sites. This is ATP synthase subunit alpha, mitochondrial (ATPA) from Zea mays (Maize).